A 502-amino-acid chain; its full sequence is NAD(P)H-quinone oxidoreductase chain 4, chloroplastic (502 aa).

A run of 14 helical transmembrane segments spans residues 4-24, 37-57, 86-106, 113-131, 136-156, 169-189, 210-230, 244-264, 274-294, 307-327, 332-352, 388-408, 418-438, and 464-484; these read FPWL…IFFV, YTIC…CYHF, GLSI…TLAA, SRLF…VGSF, LLLF…LLSM, FILY…GMGL, GLEI…SPII, HYST…YGLV, AHSI…IYAA, IAYS…SITD, GAIL…FLAG, LALP…GIIT, IVIS…SLSM, and LFVS…PDFV.

Belongs to the complex I subunit 4 family.

Its subcellular location is the plastid. The protein localises to the chloroplast thylakoid membrane. The catalysed reaction is a plastoquinone + NADH + (n+1) H(+)(in) = a plastoquinol + NAD(+) + n H(+)(out). The enzyme catalyses a plastoquinone + NADPH + (n+1) H(+)(in) = a plastoquinol + NADP(+) + n H(+)(out). The sequence is that of NAD(P)H-quinone oxidoreductase chain 4, chloroplastic from Calycanthus floridus var. glaucus (Eastern sweetshrub).